The following is a 333-amino-acid chain: Phenylalanine--tRNA ligase alpha subunit (333 aa).

Glutamate 254 lines the Mg(2+) pocket.

This sequence belongs to the class-II aminoacyl-tRNA synthetase family. Phe-tRNA synthetase alpha subunit type 1 subfamily. As to quaternary structure, tetramer of two alpha and two beta subunits. The cofactor is Mg(2+).

The protein resides in the cytoplasm. It catalyses the reaction tRNA(Phe) + L-phenylalanine + ATP = L-phenylalanyl-tRNA(Phe) + AMP + diphosphate + H(+). This Xylella fastidiosa (strain M23) protein is Phenylalanine--tRNA ligase alpha subunit.